Consider the following 408-residue polypeptide: Acetylornithine aminotransferase (408 aa).

Pyridoxal 5'-phosphate is bound by residues 107-108 (GT) and phenylalanine 141. Arginine 144 provides a ligand contact to N(2)-acetyl-L-ornithine. Residue 227-230 (DEIQ) participates in pyridoxal 5'-phosphate binding. Lysine 256 is modified (N6-(pyridoxal phosphate)lysine). Threonine 284 is a N(2)-acetyl-L-ornithine binding site. Position 285 (threonine 285) interacts with pyridoxal 5'-phosphate.

The protein belongs to the class-III pyridoxal-phosphate-dependent aminotransferase family. ArgD subfamily. In terms of assembly, homodimer. Pyridoxal 5'-phosphate is required as a cofactor.

The protein localises to the cytoplasm. The catalysed reaction is N(2)-acetyl-L-ornithine + 2-oxoglutarate = N-acetyl-L-glutamate 5-semialdehyde + L-glutamate. The protein operates within amino-acid biosynthesis; L-arginine biosynthesis; N(2)-acetyl-L-ornithine from L-glutamate: step 4/4. The protein is Acetylornithine aminotransferase of Xanthomonas axonopodis pv. citri (strain 306).